The sequence spans 634 residues: TATA box-binding protein-associated factor RNA polymerase I subunit B (634 aa).

An RRN7-type zinc finger spans residues 19–51; the sequence is LVCEYCGHGSEYAEDDADDGFFTCRQCSAIHTS. Residues Cys21, Cys24, Cys42, and Cys45 each coordinate Zn(2+). The segment at 51–80 is B-reader; sequence STQNTATNPFDFPMTPAHLSAHRRPTQPTP. Positions 54–107 are disordered; the sequence is NTATNPFDFPMTPAHLSAHRRPTQPTPTPKPFPAPRGAATGAAAPDFDDLGEPS. The span at 77-87 shows a compositional bias: pro residues; it reads QPTPTPKPFPA. The B-linker stretch occupies residues 81 to 83; that stretch reads TPK. Residues 84 to 281 are N-terminal cyclin fold; that stretch reads PFPAPRGAAT…DKLLGSSLND (198 aa). Residues 88–98 show a composition bias toward low complexity; it reads PRGAATGAAAP. The segment at 282-284 is C-terminal cyclin fold; the sequence is CPL.

The protein belongs to the RRN7/TAF1B family.

The protein localises to the nucleus. It is found in the nucleolus. Component of RNA polymerase I core factor complex that acts as a GTF2B/TFIIB-like factor and plays a key role in multiple steps during transcription initiation such as pre-initiation complex (PIC) assembly and postpolymerase recruitment events in polymerase I (Pol I) transcription. Binds rDNA promoters and plays a role in Pol I recruitment. This is TATA box-binding protein-associated factor RNA polymerase I subunit B from Oryza sativa subsp. japonica (Rice).